The chain runs to 249 residues: Interleukin-1 receptor-associated kinase 1-binding protein 1 homolog (249 aa).

This sequence belongs to the IRAK1BP1 family.

Its subcellular location is the cytoplasm. It localises to the nucleus. Its function is as follows. May be part of a signaling pathway that leads to NF-kappa-B activation. The polypeptide is Interleukin-1 receptor-associated kinase 1-binding protein 1 homolog (irak1bp1) (Danio rerio (Zebrafish)).